Reading from the N-terminus, the 473-residue chain is Aspartyl/glutamyl-tRNA(Asn/Gln) amidotransferase subunit B (473 aa).

Belongs to the GatB/GatE family. GatB subfamily. In terms of assembly, heterotrimer of A, B and C subunits.

The catalysed reaction is L-glutamyl-tRNA(Gln) + L-glutamine + ATP + H2O = L-glutaminyl-tRNA(Gln) + L-glutamate + ADP + phosphate + H(+). It catalyses the reaction L-aspartyl-tRNA(Asn) + L-glutamine + ATP + H2O = L-asparaginyl-tRNA(Asn) + L-glutamate + ADP + phosphate + 2 H(+). Its function is as follows. Allows the formation of correctly charged Asn-tRNA(Asn) or Gln-tRNA(Gln) through the transamidation of misacylated Asp-tRNA(Asn) or Glu-tRNA(Gln) in organisms which lack either or both of asparaginyl-tRNA or glutaminyl-tRNA synthetases. The reaction takes place in the presence of glutamine and ATP through an activated phospho-Asp-tRNA(Asn) or phospho-Glu-tRNA(Gln). This chain is Aspartyl/glutamyl-tRNA(Asn/Gln) amidotransferase subunit B, found in Methanococcoides burtonii (strain DSM 6242 / NBRC 107633 / OCM 468 / ACE-M).